Here is a 128-residue protein sequence, read N- to C-terminus: Diacylglycerol kinase (128 aa).

Residue Glu-34 participates in a divalent metal cation binding. The next 2 helical transmembrane spans lie at 35–55 (SAFRQIVILALFCIVLASYLA) and 58–78 (FLEWGLLILPCFLSVVVELIN). The active-site Proton acceptor is the Glu-75. Glu-82 is an a divalent metal cation binding site. Residues 107–127 (QLIGLIFWTLIWGRYLLALYL) form a helical membrane-spanning segment.

Belongs to the bacterial diacylglycerol kinase family. Mg(2+) serves as cofactor.

It is found in the cell inner membrane. The catalysed reaction is a 1,2-diacyl-sn-glycerol + ATP = a 1,2-diacyl-sn-glycero-3-phosphate + ADP + H(+). Its function is as follows. Catalyzes the ATP-dependent phosphorylation of sn-l,2-diacylglycerol (DAG) to phosphatidic acid. Involved in the recycling of diacylglycerol produced as a by-product during membrane-derived oligosaccharide (MDO) biosynthesis. The sequence is that of Diacylglycerol kinase (dgkA) from Helicobacter pylori (strain ATCC 700392 / 26695) (Campylobacter pylori).